Consider the following 130-residue polypeptide: UPF0225 protein CE1570 (130 aa).

This sequence belongs to the UPF0225 family.

The chain is UPF0225 protein CE1570 from Corynebacterium efficiens (strain DSM 44549 / YS-314 / AJ 12310 / JCM 11189 / NBRC 100395).